Reading from the N-terminus, the 232-residue chain is RNA chaperone ProQ (232 aa).

The tract at residues 105–182 (EAKARVQAQR…REEQHTPVSD (78 aa)) is disordered. Basic and acidic residues predominate over residues 117–136 (QQAKKREAAAAAGEKEDAPR). Residues 137–146 (RERKPRPTTP) are compositionally biased toward basic residues. The segment covering 147–177 (RRKEGAERKPRAQKPVEKAPKTAKAPREEQH) has biased composition (basic and acidic residues).

This sequence belongs to the ProQ family.

It is found in the cytoplasm. Its function is as follows. RNA chaperone with significant RNA binding, RNA strand exchange and RNA duplexing activities. May regulate ProP activity through an RNA-based, post-transcriptional mechanism. This Shigella dysenteriae serotype 1 (strain Sd197) protein is RNA chaperone ProQ.